Consider the following 363-residue polypeptide: Aspartate carbamoyltransferase, chloroplastic (363 aa).

The segment at 1-21 is disordered; it reads MAAARATLPLPRVPAPSPRPQ. The transit peptide at 1 to 36 directs the protein to the chloroplast; it reads MAAARATLPLPRVPAPSPRPQLRPFPSLPARRGAVA. The segment covering 11–21 has biased composition (pro residues); it reads PRVPAPSPRPQ. Carbamoyl phosphate-binding residues include Arg109 and Thr110. UMP-binding residues include Arg109 and Thr110. Residue Lys139 coordinates L-aspartate. Positions 160, 188, and 191 each coordinate carbamoyl phosphate. UMP is bound by residues Arg160 and His188. Residues Arg221 and Arg283 each coordinate UMP. Arg221 and Arg283 together coordinate L-aspartate. Positions 323 and 324 each coordinate carbamoyl phosphate.

This sequence belongs to the aspartate/ornithine carbamoyltransferase superfamily. ATCase family. Homotrimer.

It localises to the plastid. The protein localises to the chloroplast. The catalysed reaction is carbamoyl phosphate + L-aspartate = N-carbamoyl-L-aspartate + phosphate + H(+). It functions in the pathway pyrimidine metabolism; UMP biosynthesis via de novo pathway; (S)-dihydroorotate from bicarbonate: step 2/3. With respect to regulation, feedback inhibited by UMP. In terms of biological role, catalyzes the condensation of carbamoyl phosphate and aspartate to form carbamoyl aspartate and inorganic phosphate, the committed step in the de novo pyrimidine nucleotide biosynthesis pathway. This is Aspartate carbamoyltransferase, chloroplastic (PYRB) from Oryza sativa subsp. japonica (Rice).